Consider the following 96-residue polypeptide: Large ribosomal subunit protein bL27 (96 aa).

The propeptide occupies 1–11 (MLKTLENLQLF). Positions 13 to 36 (HKKGGGSTSNGRDSQAKRLGAKAA) are disordered.

Belongs to the bacterial ribosomal protein bL27 family. In terms of processing, the N-terminus is cleaved by ribosomal processing cysteine protease Prp.

This Streptococcus thermophilus (strain CNRZ 1066) protein is Large ribosomal subunit protein bL27.